A 291-amino-acid chain; its full sequence is MTDSFPFSVQESVPLSRFSTFRIGGPARYFKELTSLSEALTVFSYLHTHPLPYIIIGKGSNCLFDDQGFDGLVLYNNIQGQEFLSDTQIKVLSGSSFALLGKRLSSQGFSGLEFAVGIPGTVGGAVFMNAGTTLANTASSLINVEIIDHSGILLSIPREKLLFSYRTSPFQKKPAFIASATFQLTKDPQAAKRAKALIEERILKQPYEYPSAGCIFRNPEGLSAGALIDRAGLKGLKIGGGQISEKHGNFIINTGNACTADILELIEIIQKTLKKQGISLHKEVRIIPFRL.

Residues 22–187 (RIGGPARYFK…ASATFQLTKD (166 aa)) form the FAD-binding PCMH-type domain. Arg166 is a catalytic residue. Catalysis depends on Cys214, which acts as the Proton donor. Glu283 is an active-site residue.

The protein belongs to the MurB family. FAD serves as cofactor.

It is found in the cytoplasm. It catalyses the reaction UDP-N-acetyl-alpha-D-muramate + NADP(+) = UDP-N-acetyl-3-O-(1-carboxyvinyl)-alpha-D-glucosamine + NADPH + H(+). The protein operates within cell wall biogenesis; peptidoglycan biosynthesis. Cell wall formation. The protein is UDP-N-acetylenolpyruvoylglucosamine reductase of Chlamydia trachomatis serovar L2 (strain ATCC VR-902B / DSM 19102 / 434/Bu).